A 249-amino-acid chain; its full sequence is Tegument protein UL51 homolog (249 aa).

Belongs to the herpesviridae UL51 family. Oligomerizes. Interacts with MDV019; this interaction mediates MDV019 incorporation to virions. In terms of processing, phosphorylated.

It localises to the virion tegument. It is found in the host cytoplasm. The protein localises to the host Golgi apparatus. Its function is as follows. Plays several roles during the time course of infection, including egress of virus particles from the perinuclear space and secondary envelopment of cytoplasmic capsids that bud into specific trans-Golgi network (TGN)-derived membranes. This is Tegument protein UL51 homolog (MDV065) from Gallus gallus (Chicken).